Consider the following 975-residue polypeptide: NLR family member X1 (975 aa).

A mitochondrion-targeting transit peptide spans 1–86 (MRWGHHLPRA…EAIQRHRRNL (86 aa)). Residues 75-556 (ATEAIQRHRR…RALPLLFNLI (482 aa)) are required for interaction with MAVS. The region spanning 160–483 (QTVVLYGTVG…LRFFLAPCVE (324 aa)) is the NACHT domain. 166–173 (GTVGTGKS) is a binding site for ATP. The required for the repression of MAVS-induced interferon signaling stretch occupies residues 556-974 (IKVVPRVFGR…ALLEQLGSSG (419 aa)). The 28-residue stretch at 667 to 694 (RQVLPPSELLDHLFFHYEFQNQRFSAEV) folds into the LRRNT domain. 8 LRR repeats span residues 695 to 718 (LSSL…VVAA), 724 to 747 (RHAL…TLLP), 749 to 777 (FLRA…LLHD), 778 to 801 (QCQI…VLME), 811 to 834 (HLSL…LDRN), 835 to 857 (RQLQ…ALAR), 858 to 877 (AARE…ELSS), and 878 to 899 (EGRQ…VVVS). The 65-residue stretch at 906–970 (VSEYWSVILS…GEVRALLEQL (65 aa)) folds into the LRRCT domain.

This sequence belongs to the NLRP family. In terms of assembly, homohexamer. Interacts with MAVS. Interacts with TUFM. (Microbial infection) Interacts with influenza A virus protein PB1-F2. Ubiquitously expressed. Strongest expression in mammary gland, heart and muscle. Detected in HeLa, HEK293T, THP-1, HL-60, Raji and Jurkat cell lines (at protein level).

Its subcellular location is the mitochondrion outer membrane. Functionally, participates in antiviral signaling. Acts as a negative regulator of MAVS-mediated antiviral responses, through the inhibition of the virus-induced RLH (RIG-like helicase)-MAVS interaction. Instead, promotes autophagy by interacting with TUFM and subsequently recruiting the autophagy-related proteins ATG5 and ATG12. Also regulates MAVS-dependent NLRP3 inflammasome activation to attenuate apoptosis. Has no inhibitory function on NF-kappa-B signaling pathway, but enhances NF-kappa-B and JUN N-terminal kinase dependent signaling through the production of reactive oxygen species. Regulates viral mediated-inflammation and energy metabolism in a sex-dependent manner. In females, prevents uncontrolled inflammation and energy metabolism and thus, may contribute to the sex differences observed in infectious and inflammatory diseases. The polypeptide is NLR family member X1 (NLRX1) (Homo sapiens (Human)).